A 519-amino-acid chain; its full sequence is Spermidine/putrescine import ATP-binding protein PotA (519 aa).

The ABC transporter domain occupies Leu6–Ile401. ATP is bound at residue Gly39–Thr46. The insert stretch occupies residues Arg107–Arg270.

It belongs to the ABC transporter superfamily. Spermidine/putrescine importer (TC 3.A.1.11.1) family. In terms of assembly, the complex is composed of two ATP-binding proteins (PotA), two transmembrane proteins (PotB and PotC) and a solute-binding protein (PotD).

The protein localises to the cell membrane. The enzyme catalyses ATP + H2O + polyamine-[polyamine-binding protein]Side 1 = ADP + phosphate + polyamineSide 2 + [polyamine-binding protein]Side 1.. In terms of biological role, part of the ABC transporter complex PotABCD involved in spermidine/putrescine import. Responsible for energy coupling to the transport system. The polypeptide is Spermidine/putrescine import ATP-binding protein PotA (Ureaplasma parvum serovar 3 (strain ATCC 700970)).